Here is a 138-residue protein sequence, read N- to C-terminus: Acidic phospholipase A2 CH-E6' (138 aa).

An N-terminal signal peptide occupies residues 1–16 (MRTLWIVAVLLLGVEG). 7 disulfides stabilise this stretch: C42–C131, C44–C60, C59–C111, C65–C138, C66–C104, C73–C97, and C91–C102. Ca(2+) contacts are provided by Y43, G45, and G47. H63 is an active-site residue. A Ca(2+)-binding site is contributed by D64. D105 is a catalytic residue.

It belongs to the phospholipase A2 family. Group II subfamily. D49 sub-subfamily. The cofactor is Ca(2+). Expressed by the venom gland.

The protein resides in the secreted. It catalyses the reaction a 1,2-diacyl-sn-glycero-3-phosphocholine + H2O = a 1-acyl-sn-glycero-3-phosphocholine + a fatty acid + H(+). Functionally, snake venom phospholipase A2 (PLA2) that shows high lipolytic and weak ADP-induced platelet aggregation activities. Also shows weak anticoagulant activity. PLA2 catalyzes the calcium-dependent hydrolysis of the 2-acyl groups in 3-sn-phosphoglycerides. This chain is Acidic phospholipase A2 CH-E6', found in Crotalus horridus (Timber rattlesnake).